The chain runs to 230 residues: 2-C-methyl-D-erythritol 4-phosphate cytidylyltransferase (230 aa).

The protein belongs to the IspD/TarI cytidylyltransferase family. IspD subfamily.

The enzyme catalyses 2-C-methyl-D-erythritol 4-phosphate + CTP + H(+) = 4-CDP-2-C-methyl-D-erythritol + diphosphate. It functions in the pathway isoprenoid biosynthesis; isopentenyl diphosphate biosynthesis via DXP pathway; isopentenyl diphosphate from 1-deoxy-D-xylulose 5-phosphate: step 2/6. Catalyzes the formation of 4-diphosphocytidyl-2-C-methyl-D-erythritol from CTP and 2-C-methyl-D-erythritol 4-phosphate (MEP). This is 2-C-methyl-D-erythritol 4-phosphate cytidylyltransferase from Laribacter hongkongensis (strain HLHK9).